We begin with the raw amino-acid sequence, 297 residues long: Mycothiol acetyltransferase (297 aa).

N-acetyltransferase domains lie at 7–156 (VFSD…VTIR) and 153–297 (VTIR…PPPH). 1D-myo-inositol 2-(L-cysteinylamino)-2-deoxy-alpha-D-glucopyranoside is bound at residue Glu-38. 79 to 81 (VVV) contacts acetyl-CoA. 3 residues coordinate 1D-myo-inositol 2-(L-cysteinylamino)-2-deoxy-alpha-D-glucopyranoside: Glu-180, Lys-219, and Glu-227. Acetyl-CoA-binding positions include 231 to 233 (VGV) and 238 to 244 (QGLGLGR). Tyr-265 is a 1D-myo-inositol 2-(L-cysteinylamino)-2-deoxy-alpha-D-glucopyranoside binding site. Position 270-275 (270-275 (NRPALR)) interacts with acetyl-CoA.

This sequence belongs to the acetyltransferase family. MshD subfamily. In terms of assembly, monomer.

The enzyme catalyses 1D-myo-inositol 2-(L-cysteinylamino)-2-deoxy-alpha-D-glucopyranoside + acetyl-CoA = mycothiol + CoA + H(+). Functionally, catalyzes the transfer of acetyl from acetyl-CoA to desacetylmycothiol (Cys-GlcN-Ins) to form mycothiol. This is Mycothiol acetyltransferase from Thermomonospora curvata (strain ATCC 19995 / DSM 43183 / JCM 3096 / KCTC 9072 / NBRC 15933 / NCIMB 10081 / Henssen B9).